The sequence spans 343 residues: Thromboxane A2 receptor (343 aa).

At 1-29 (MWPNGSSLGPCFRPTNITLEERRLIASPW) the chain is on the extracellular side. 2 N-linked (GlcNAc...) asparagine glycosylation sites follow: Asn4 and Asn16. The chain crosses the membrane as a helical span at residues 30 to 52 (FAASFCVVGLASNLLALSVLAGA). Residues 53 to 66 (RQGGSHTRSSFLTF) are Cytoplasmic-facing. The chain crosses the membrane as a helical span at residues 67-87 (LCGLVLTDFLGLLVTGAIVVS). Topologically, residues 88 to 106 (QHAALFEWHAVDPGCRLCR) are extracellular. Residues Cys105 and Cys183 are joined by a disulfide bond. The helical transmembrane segment at 107–128 (FMGVVMIFFGLSPLLLGATMAS) threads the bilayer. The Cytoplasmic portion of the chain corresponds to 129 to 149 (ERFLGITRPFSRPVVTSQRRA). Residues 150–172 (WATVGLVWAAALALGLLPLLGLG) form a helical membrane-spanning segment. The Extracellular segment spans residues 173-193 (RYTVQYPGSWCFLTLGAESGD). Residues 194-219 (VAFGLLFSMLGGLSVGLSFLLNTVSV) traverse the membrane as a helical segment. Topologically, residues 220 to 246 (ATLCHVYHGQEAAQQRPRDSEVEMMAQ) are cytoplasmic. Residues 247 to 270 (LLGIMLVASVCWLPLLVFIAQTVL) form a helical membrane-spanning segment. Topologically, residues 271-289 (RNPPAMSPSGQLSRATEQE) are extracellular. Residues 290–311 (LLIYLRVATWNQILDPWVYILF) form a helical membrane-spanning segment. The Cytoplasmic portion of the chain corresponds to 312–343 (RRAVLRRLQPRLSTRPRSLSLQPQLTQRSGLQ). Ser329 and Ser331 each carry phosphoserine.

It belongs to the G-protein coupled receptor 1 family. Interacts with RPGRIP1L. Interacts with RACK1; the interaction regulates TBXA2R cell surface expression.

Its subcellular location is the cell membrane. Receptor for thromboxane A2 (TXA2), a potent stimulator of platelet aggregation. The activity of this receptor is mediated by a G-protein that activates a phosphatidylinositol-calcium second messenger system. In the kidney, the binding of TXA2 to glomerular TP receptors causes intense vasoconstriction. Activates phospholipase C and adenylyl cyclase. The polypeptide is Thromboxane A2 receptor (TBXA2R) (Chlorocebus aethiops (Green monkey)).